A 116-amino-acid polypeptide reads, in one-letter code: MKNIFFSVFFLLSFLLCLANVSEAAVPCSTVDMKAAACVGFATGKDSKPSSACCTGLQQLAQTVKSVDDKKAICRCLKASSKSLGIKDQFLSKIPAACNIKVGFPVSTATNCETIH.

The signal sequence occupies residues 1 to 24 (MKNIFFSVFFLLSFLLCLANVSEA). 4 cysteine pairs are disulfide-bonded: C28-C76, C38-C53, C54-C98, and C74-C112.

This sequence belongs to the plant LTP family.

Functionally, plant non-specific lipid-transfer proteins transfer phospholipids as well as galactolipids across membranes. May play a role in wax or cutin deposition in the cell walls of expanding epidermal cells and certain secretory tissues. The polypeptide is Non-specific lipid-transfer protein D, cotyledon-specific isoform (Ricinus communis (Castor bean)).